Here is a 496-residue protein sequence, read N- to C-terminus: Probable CtpA-like serine protease (496 aa).

A compositionally biased stretch (basic and acidic residues) spans 1–16 (MDDKQHTSSSDDERAE). The tract at residues 1–27 (MDDKQHTSSSDDERAEIATSNQDQETN) is disordered. Polar residues predominate over residues 18-27 (ATSNQDQETN). The helical transmembrane segment at 39-59 (FISILIGTTLITAVITVVAYI) threads the bilayer. Positions 124 to 206 (TKSFNEGVSG…TEVTLTVQRG (83 aa)) constitute a PDZ domain. Active-site charge relay system residues include Ser329, Asp340, and Lys354.

The protein belongs to the peptidase S41A family.

It localises to the cell membrane. The protein is Probable CtpA-like serine protease of Staphylococcus aureus (strain Mu50 / ATCC 700699).